We begin with the raw amino-acid sequence, 147 residues long: Hemoglobin subunit beta-Y (147 aa).

The Globin domain occupies 3 to 147; that stretch reads HFTAEEKAAI…VANALSLKYH (145 aa). 2 residues coordinate heme b: His64 and His93.

Belongs to the globin family. As to quaternary structure, heterotetramer of two alpha chains and two beta chains.

Functionally, this is a minor early embryonic beta chain. This chain is Hemoglobin subunit beta-Y (HBBY), found in Mesocricetus auratus (Golden hamster).